The sequence spans 205 residues: Thymidine kinase (205 aa).

ATP contacts are provided by residues Ser9–Ser16 and Asp87–Gln90. Glu88 (proton acceptor) is an active-site residue. Positions 145, 147, 182, and 185 each coordinate Zn(2+).

Belongs to the thymidine kinase family. In terms of assembly, homotetramer.

The protein localises to the cytoplasm. The enzyme catalyses thymidine + ATP = dTMP + ADP + H(+). The polypeptide is Thymidine kinase (Salmonella paratyphi A (strain ATCC 9150 / SARB42)).